A 200-amino-acid chain; its full sequence is NADH-quinone oxidoreductase subunit B (200 aa).

The [4Fe-4S] cluster site is built by Cys78, Cys79, Cys144, and Cys174.

This sequence belongs to the complex I 20 kDa subunit family. In terms of assembly, NDH-1 is composed of 14 different subunits. Subunits NuoB, C, D, E, F, and G constitute the peripheral sector of the complex. The cofactor is [4Fe-4S] cluster.

It localises to the cell membrane. The enzyme catalyses a quinone + NADH + 5 H(+)(in) = a quinol + NAD(+) + 4 H(+)(out). In terms of biological role, NDH-1 shuttles electrons from NADH, via FMN and iron-sulfur (Fe-S) centers, to quinones in the respiratory chain. The immediate electron acceptor for the enzyme in this species is believed to be ubiquinone. Couples the redox reaction to proton translocation (for every two electrons transferred, four hydrogen ions are translocated across the cytoplasmic membrane), and thus conserves the redox energy in a proton gradient. The protein is NADH-quinone oxidoreductase subunit B of Dehalococcoides mccartyi (strain ATCC BAA-2266 / KCTC 15142 / 195) (Dehalococcoides ethenogenes (strain 195)).